A 336-amino-acid chain; its full sequence is Terephthalate 1,2-dioxygenase, reductase component 2 (336 aa).

The 2Fe-2S ferredoxin-type domain maps to 3–91 (HQIHIHDSDI…DIRIHPSSFR (89 aa)). 4 residues coordinate [2Fe-2S] cluster: C37, C42, C45, and C75. The FAD-binding FR-type domain maps to 98–197 (RKRFTAKVYS…ELPFGSIALK (100 aa)).

In terms of assembly, monomer. Part of a multicomponent enzyme system composed of a reductase (TphA1I or TphA1II) and a two-subunit oxygenase component (TphA2I or TphA2II and TphA3I or TphA3II). It depends on FAD as a cofactor. The cofactor is [2Fe-2S] cluster.

The catalysed reaction is terephthalate + NADH + O2 + H(+) = (3S,4R)-3,4-dihydroxycyclohexa-1,5-diene-1,4-dicarboxylate + NAD(+). Functionally, component of the terephthalate 1,2-dioxygenase multicomponent enzyme system which catalyzes the dioxygenation of terephthalate (TER/TPA) to 1,2-dihydroxy-3,5-cyclohexadiene-1,4-dicarboxylic acid (DCD). TphA1 probably reduces TphA2A3. It can also use 2,5-dicarboxypyridine (PDC) and 1,4-napthalenedicarboxylic acid (NDC) as substrates, and preferentially uses NADPH which is the physiological electron donor. This chain is Terephthalate 1,2-dioxygenase, reductase component 2 (tphA1II), found in Comamonas sp.